The chain runs to 90 residues: Small ribosomal subunit protein bS20 (90 aa).

Belongs to the bacterial ribosomal protein bS20 family.

Functionally, binds directly to 16S ribosomal RNA. This is Small ribosomal subunit protein bS20 from Rickettsia akari (strain Hartford).